The chain runs to 117 residues: Immunoglobulin kappa variable 1D-17 (117 aa).

Positions 1–22 are cleaved as a signal peptide; the sequence is MDMRVPAQLLGLLLLWFPGARC. The framework-1 stretch occupies residues 23 to 45; sequence NIQMTQSPSAMSASVGDRVTITC. The 95-residue stretch at 23–117 folds into the Ig-like domain; that stretch reads NIQMTQSPSA…YYCLQHNSYP (95 aa). A disulfide bridge links Cys-45 with Cys-110. The complementarity-determining-1 stretch occupies residues 46–56; that stretch reads RARQGISNYLA. Positions 57 to 71 are framework-2; the sequence is WFQQKPGKVPKHLIY. The tract at residues 72–78 is complementarity-determining-2; the sequence is AASSLQS. The framework-3 stretch occupies residues 79–110; sequence GVPSRFSGSGSGTEFTLTISSLQPEDFATYYC. Positions 111–117 are complementarity-determining-3; the sequence is LQHNSYP.

As to quaternary structure, immunoglobulins are composed of two identical heavy chains and two identical light chains; disulfide-linked.

The protein resides in the secreted. The protein localises to the cell membrane. In terms of biological role, v region of the variable domain of immunoglobulin light chains that participates in the antigen recognition. Immunoglobulins, also known as antibodies, are membrane-bound or secreted glycoproteins produced by B lymphocytes. In the recognition phase of humoral immunity, the membrane-bound immunoglobulins serve as receptors which, upon binding of a specific antigen, trigger the clonal expansion and differentiation of B lymphocytes into immunoglobulins-secreting plasma cells. Secreted immunoglobulins mediate the effector phase of humoral immunity, which results in the elimination of bound antigens. The antigen binding site is formed by the variable domain of one heavy chain, together with that of its associated light chain. Thus, each immunoglobulin has two antigen binding sites with remarkable affinity for a particular antigen. The variable domains are assembled by a process called V-(D)-J rearrangement and can then be subjected to somatic hypermutations which, after exposure to antigen and selection, allow affinity maturation for a particular antigen. This is Immunoglobulin kappa variable 1D-17 from Homo sapiens (Human).